Reading from the N-terminus, the 341-residue chain is Anthranilate phosphoribosyltransferase (341 aa).

Residues Gly-80, Gly-83–Asp-84, Thr-88, Asn-90–Thr-93, Lys-108–Ser-116, and Ser-120 each bind 5-phospho-alpha-D-ribose 1-diphosphate. Gly-80 provides a ligand contact to anthranilate. Ser-92 serves as a coordination point for Mg(2+). Asn-111 is an anthranilate binding site. Arg-166 provides a ligand contact to anthranilate. Mg(2+) is bound by residues Asp-225 and Glu-226.

Belongs to the anthranilate phosphoribosyltransferase family. In terms of assembly, homodimer. The cofactor is Mg(2+).

It carries out the reaction N-(5-phospho-beta-D-ribosyl)anthranilate + diphosphate = 5-phospho-alpha-D-ribose 1-diphosphate + anthranilate. Its pathway is amino-acid biosynthesis; L-tryptophan biosynthesis; L-tryptophan from chorismate: step 2/5. Catalyzes the transfer of the phosphoribosyl group of 5-phosphorylribose-1-pyrophosphate (PRPP) to anthranilate to yield N-(5'-phosphoribosyl)-anthranilate (PRA). This Brevibacillus brevis (strain 47 / JCM 6285 / NBRC 100599) protein is Anthranilate phosphoribosyltransferase.